The primary structure comprises 376 residues: GDSL esterase/lipase At5g55050 (376 aa).

A signal peptide spans methionine 1–alanine 29. Catalysis depends on serine 46, which acts as the Nucleophile. Residues asparagine 134 and asparagine 245 are each glycosylated (N-linked (GlcNAc...) asparagine). Active-site residues include aspartate 340 and histidine 344.

The protein belongs to the 'GDSL' lipolytic enzyme family.

It is found in the secreted. This Arabidopsis thaliana (Mouse-ear cress) protein is GDSL esterase/lipase At5g55050.